Here is a 328-residue protein sequence, read N- to C-terminus: Cytochrome c biogenesis protein CcsA (328 aa).

8 helical membrane-spanning segments follow: residues 13-33 (ISFSVVSIVLTIYFLTLLVNL), 46-66 (GIIITFFGITGLLFTRWIYSG), 73-93 (LYESLIFLSWAFSIIHMVSYF), 101-121 (LNAITAPSAIFIQGFATSGLL), 146-166 (MILGYGALLCGSLLSIALLVI), 234-254 (IISLGFIFLTVGILSGAVWAN), 263-283 (WDPKETWAFITWTIFAIYLHI), and 295-315 (AIVASIGFLLIWICYFGVILL).

This sequence belongs to the CcmF/CycK/Ccl1/NrfE/CcsA family. May interact with Ccs1.

It localises to the plastid. It is found in the chloroplast thylakoid membrane. Functionally, required during biogenesis of c-type cytochromes (cytochrome c6 and cytochrome f) at the step of heme attachment. The polypeptide is Cytochrome c biogenesis protein CcsA (Crucihimalaya wallichii (Rock-cress)).